Here is a 341-residue protein sequence, read N- to C-terminus: MYPLARRILFALDAEKAHHFTLDALNMVYKLGLIPVTGNRTKPVKLMGLDLPNPVGLAAGLDKNGEYIDALGALGFGFIEIGTVTPNPQPGNPQPRLFRVPEYQGIINRMGFNNHGIDAMIQNIEKSKFSGVLGINIGKNAVTPIENAADDYLICLEKAYAHASYITVNISSPNTKNLRALQGGDELSALLEALKNKQAQLASVHGKYVPLAVKIAPDLDEAQIEDIAHVVKSVEMDGIIATNTTIDKSSLGSHPLAGEQGGLSGLPVHEKSNRVLKLLADHIDGKLPIIGVGGIMEGRDAAEKIRLGATAVQVYSGLIYKGPALVKECLKALARSAQNAV.

FMN contacts are provided by residues 59-63 and Thr-83; that span reads AGLDK. Lys-63 contacts substrate. Position 108–112 (108–112) interacts with substrate; the sequence is NRMGF. The FMN site is built by Asn-136 and Asn-169. Position 169 (Asn-169) interacts with substrate. Catalysis depends on Ser-172, which acts as the Nucleophile. Asn-174 is a binding site for substrate. Residues Lys-214 and Thr-242 each contribute to the FMN site. 243–244 contacts substrate; that stretch reads NT. FMN-binding positions include Gly-265, Gly-294, and 315-316; that span reads YS.

This sequence belongs to the dihydroorotate dehydrogenase family. Type 2 subfamily. In terms of assembly, monomer. FMN is required as a cofactor.

The protein localises to the cell membrane. The enzyme catalyses (S)-dihydroorotate + a quinone = orotate + a quinol. It functions in the pathway pyrimidine metabolism; UMP biosynthesis via de novo pathway; orotate from (S)-dihydroorotate (quinone route): step 1/1. Catalyzes the conversion of dihydroorotate to orotate with quinone as electron acceptor. In Neisseria meningitidis serogroup C (strain 053442), this protein is Dihydroorotate dehydrogenase (quinone).